The primary structure comprises 254 residues: Undecaprenyl-diphosphatase (254 aa).

Transmembrane regions (helical) follow at residues 1–21 (MGII…FLPV), 41–61 (AHKA…VFLY), 75–95 (LIIA…IIKG), 96–116 (LFSP…FIAV), 130–150 (ILKI…IAMI), 174–194 (AEFS…YDIM), 210–230 (TGFV…IGFV), and 234–254 (NFVP…LFVL).

This sequence belongs to the UppP family.

The protein resides in the cell inner membrane. It catalyses the reaction di-trans,octa-cis-undecaprenyl diphosphate + H2O = di-trans,octa-cis-undecaprenyl phosphate + phosphate + H(+). Its function is as follows. Catalyzes the dephosphorylation of undecaprenyl diphosphate (UPP). Confers resistance to bacitracin. This chain is Undecaprenyl-diphosphatase, found in Persephonella marina (strain DSM 14350 / EX-H1).